Here is a 403-residue protein sequence, read N- to C-terminus: D-mannonate dehydratase Caul1427 (403 aa).

Positions 38 and 123 each coordinate substrate. Tyrosine 160 (proton donor/acceptor) is an active-site residue. Aspartate 211 serves as a coordination point for Mg(2+). The Proton donor/acceptor role is filled by histidine 213. Mg(2+)-binding residues include glutamate 237 and glutamate 263. Glutamate 263, arginine 284, histidine 313, aspartate 317, and glutamate 340 together coordinate substrate.

This sequence belongs to the mandelate racemase/muconate lactonizing enzyme family. GalD subfamily. It depends on Mg(2+) as a cofactor.

The catalysed reaction is D-mannonate = 2-dehydro-3-deoxy-D-gluconate + H2O. It participates in carbohydrate metabolism; pentose and glucuronate interconversion. Its function is as follows. Catalyzes the dehydration of D-mannonate. Has no detectable activity with a panel of 70 other acid sugars (in vitro). This is D-mannonate dehydratase Caul1427 from Caulobacter sp. (strain K31).